A 52-amino-acid polypeptide reads, in one-letter code: UPF0181 protein HI_1434.2 (52 aa).

This sequence belongs to the UPF0181 family.

The polypeptide is UPF0181 protein HI_1434.2 (Haemophilus influenzae (strain ATCC 51907 / DSM 11121 / KW20 / Rd)).